The following is a 344-amino-acid chain: Protein pelota homolog (344 aa).

It belongs to the eukaryotic release factor 1 family. Pelota subfamily. Monomer. A divalent metal cation serves as cofactor.

Its subcellular location is the cytoplasm. May function in recognizing stalled ribosomes, interact with stem-loop structures in stalled mRNA molecules, and effect endonucleolytic cleavage of the mRNA. May play a role in the release non-functional ribosomes and degradation of damaged mRNAs. Has endoribonuclease activity. This Archaeoglobus fulgidus (strain ATCC 49558 / DSM 4304 / JCM 9628 / NBRC 100126 / VC-16) protein is Protein pelota homolog.